A 1077-amino-acid chain; its full sequence is MEEGPIKKKLKSAGQGSGKTDAFRNFEQFFFRLNTLYTFLICRKHVVPTFKTLCGPIETALKRTVTKEDLAMVMALMPRECVFKYIDENQIYTETKIFDFNNGGFQQKENDIFELKDVDDQNQTQKSTQLLIFEFIDGTMQRSWSASDRFSQIKIPTYTTEEMKKMISKREALFKSRLREFILEKEKANLDPFSELTNLAQKYIPRERDYEDPIEAMMKAKQESNEMSIPNYSNNSVITTIPQMIEKLKSTEFYASQIKHCFTIPSRTAKYKGLCFELAPEVYQGMEHENFYSHQADAINSLHQGENVIITTSTSSGKSLIYQLAAIDLLLKDPESTFMYIFPTKALAQDQKRAFKVILSKIPELKNAVVDTYDGDTEPEERAYIRKNARVIFTNPDMIHTSILPNHANWRHFLYHLKLVVVDELHIYKGLFGSHVALVMRRLLRLCHCFYENSGLQFISCSATLKSPVQHMKDMFGINEVTLIHEDGSPTGAKHLVVWNPPILPQHERKRENFIRESAKILVQLILNNVRTIAFCYVRRVCELLMKEVRNIFIETGREDLVTEVMSYRGGYSASDRRKIEREMFHGNLKAVISTNALELGIDIGGLDAVLMCGFPLSMANFHQQSGRAGRRNNDSLTLVVASDSPVDQHYVAHPESLLEVNNFESYQDLVLDFNNILILEGHIQCAAFELPINFERDKQYFTESHLRKICVERLHHNQDGYHASNRFLPWPSKCVSLRGGEEDQFAVVDITNGRNIIIEEIEASRTSFTLYDGGIFIHQGYPYLVKEFNPDERYAKVQRVDVDWVTNQRDFTDVDPQEIELIRSLRNSDVPVYFGKIKTTIIVFGFFKVDKYKRIIDAIETHNPPVIINSKGLWIDMPKYALEICQKKQLNVAGAIHGAQHAIMGMLPRFIVAGVDEIQTECKAPEKEFAERQTKRKRPARLIFYDSKGGKYGSGLCVKAFEHIDDIIESSLRRIEECPCSDGCPDCVAASFCKENSLVLSKPGAQVVLHCILGHSEDSFIDLIKDGPEPNMPEIKVETVIPVSEHVNFSDDFKIIDVRRATKDDTHTNEIIKKEI.

The 185-residue stretch at 299 to 483 (INSLHQGENV…DMFGINEVTL (185 aa)) folds into the Helicase ATP-binding domain. Position 312 to 319 (312 to 319 (TSTSSGKS)) interacts with ATP. The DEAH box motif lies at 423–426 (DELH). The Helicase C-terminal domain occupies 521-678 (ILVQLILNNV…DLVLDFNNIL (158 aa)).

Belongs to the helicase family. HRQ1 subfamily. Forms heptamer rings. Interacts with RAD4. Mg(2+) is required as a cofactor.

The protein resides in the nucleus. The catalysed reaction is Couples ATP hydrolysis with the unwinding of duplex DNA by translocating in the 3'-5' direction.. It catalyses the reaction ATP + H2O = ADP + phosphate + H(+). Functionally, helicase with 3'-5' helicase activity involved in genome stability. Functions in the RAD4-dependent nucleotide excision repair (NER) pathway and plays a critical role in DNA interstrand cross-link repair. Unwinds relatively long duplex DNA up to 120-bp and requires a long 3'-tail of at least 70 nucleotides for efficient unwinding of duplex DNA. Activity is significantly stimulated by a preexisting fork structure. Shows both processive helicase and DNA strand annealing activities. Affects telomere length by a non-catalytic mechanism, probably through inhibiting telomerase by competing with it for ssDNA binding. The sequence is that of ATP-dependent helicase HRQ1 from Saccharomyces cerevisiae (strain ATCC 204508 / S288c) (Baker's yeast).